A 295-amino-acid chain; its full sequence is Cytidine deaminase (295 aa).

CMP/dCMP-type deaminase domains follow at residues 48–168 (TDNQ…FGPS) and 187–295 (EDDD…YLSL). 89 to 91 (NME) contributes to the substrate binding site. H102 lines the Zn(2+) pocket. Residue E104 is the Proton donor of the active site. Zn(2+)-binding residues include C129 and C132.

It belongs to the cytidine and deoxycytidylate deaminase family. As to quaternary structure, homodimer. The cofactor is Zn(2+).

The enzyme catalyses cytidine + H2O + H(+) = uridine + NH4(+). It catalyses the reaction 2'-deoxycytidine + H2O + H(+) = 2'-deoxyuridine + NH4(+). This enzyme scavenges exogenous and endogenous cytidine and 2'-deoxycytidine for UMP synthesis. The chain is Cytidine deaminase from Vibrio vulnificus (strain CMCP6).